The primary structure comprises 343 residues: MSQRTLTQFLIEQQRKEAALPAQLRLLVEIVARACKTISHCVNKGALGGMLGNLTSENVQGEVQKKLDVIANEKLLEANEWGGHLAAMASEEMETIHLIPNRYPKGEYLLLFDPIDGSSNIDVDLSVGTIFSVLTAPEDVSGRAVTEADFLQPGRKQVAAGYAIYGPQTLLILSVGTGVYEFALDREMGSWVLTNERIRIPSGNREFAINMSNMRHWAPPVRRYIDECLAGTTGPREANFNMRWTASMVADIHRILKRGGIFMYPWDAREPDRAGKLRLMYEANPMGFLIEQAGGMAFDGNHRILDIEPKALHQRVGVVMGDRDEVKRVVQYHHDANLAKQTA.

4 residues coordinate Mg(2+): glutamate 91, aspartate 113, isoleucine 115, and aspartate 116. Substrate-binding positions include 116 to 119, asparagine 210, and lysine 276; that span reads DGSS. Glutamate 282 lines the Mg(2+) pocket.

Belongs to the FBPase class 1 family. As to quaternary structure, homotetramer. Mg(2+) is required as a cofactor.

The protein resides in the cytoplasm. It carries out the reaction beta-D-fructose 1,6-bisphosphate + H2O = beta-D-fructose 6-phosphate + phosphate. Its pathway is carbohydrate biosynthesis; gluconeogenesis. The sequence is that of Fructose-1,6-bisphosphatase class 1 from Parvibaculum lavamentivorans (strain DS-1 / DSM 13023 / NCIMB 13966).